A 343-amino-acid chain; its full sequence is Ferrochelatase (343 aa).

Fe cation is bound by residues His191 and Glu270.

It belongs to the ferrochelatase family.

The protein resides in the cytoplasm. The catalysed reaction is heme b + 2 H(+) = protoporphyrin IX + Fe(2+). It participates in porphyrin-containing compound metabolism; protoheme biosynthesis; protoheme from protoporphyrin-IX: step 1/1. Catalyzes the ferrous insertion into protoporphyrin IX. This chain is Ferrochelatase, found in Phenylobacterium zucineum (strain HLK1).